The following is an 879-amino-acid chain: Alanine--tRNA ligase (879 aa).

Zn(2+) is bound by residues histidine 566, histidine 570, cysteine 668, and histidine 672.

Belongs to the class-II aminoacyl-tRNA synthetase family. It depends on Zn(2+) as a cofactor.

It localises to the cytoplasm. The catalysed reaction is tRNA(Ala) + L-alanine + ATP = L-alanyl-tRNA(Ala) + AMP + diphosphate. In terms of biological role, catalyzes the attachment of alanine to tRNA(Ala) in a two-step reaction: alanine is first activated by ATP to form Ala-AMP and then transferred to the acceptor end of tRNA(Ala). Also edits incorrectly charged Ser-tRNA(Ala) and Gly-tRNA(Ala) via its editing domain. This Listeria innocua serovar 6a (strain ATCC BAA-680 / CLIP 11262) protein is Alanine--tRNA ligase.